An 894-amino-acid chain; its full sequence is Microsomal triglyceride transfer protein large subunit (894 aa).

The signal sequence occupies residues 1–18; that stretch reads MILLAVLFLCFISSYSAS. The region spanning 28-659 is the Vitellogenin domain; sequence LNNDRLYKLT…IFQYIGKAGL (632 aa). Residues cysteine 174 and cysteine 194 are joined by a disulfide bond.

As to quaternary structure, heterodimer; heterodimerizes with the protein disulfide isomerase (P4HB/PDI). Interacts with APOB. Interacts with PRAP1. In terms of tissue distribution, liver and small intestine. Also found in ovary, testis and kidney.

Its subcellular location is the endoplasmic reticulum. It localises to the golgi apparatus. The enzyme catalyses a 1,2-diacyl-sn-glycero-3-phosphocholine(in) = a 1,2-diacyl-sn-glycero-3-phosphocholine(out). It catalyses the reaction a 1,2-diacyl-sn-glycero-3-phosphoethanolamine(in) = a 1,2-diacyl-sn-glycero-3-phosphoethanolamine(out). It carries out the reaction a cholesterol ester(in) = a cholesterol ester(out). The catalysed reaction is a triacyl-sn-glycerol(in) = a triacyl-sn-glycerol(out). In terms of biological role, catalyzes the transport of triglyceride, cholesteryl ester, and phospholipid between phospholipid surfaces. Required for the assembly and secretion of plasma lipoproteins that contain apolipoprotein B. May be involved in regulating cholesteryl ester biosynthesis in cells that produce lipoproteins. This Homo sapiens (Human) protein is Microsomal triglyceride transfer protein large subunit (MTTP).